We begin with the raw amino-acid sequence, 141 residues long: Hemoglobin subunit alpha (141 aa).

One can recognise a Globin domain in the interval 1 to 141 (VLSPADKNNV…VSTVLTSKYR (141 aa)). Ser-3 is modified (phosphoserine). Residues Lys-7 and Lys-11 each carry the N6-succinyllysine modification. An N6-acetyllysine; alternate modification is found at Lys-16. The residue at position 16 (Lys-16) is an N6-succinyllysine; alternate. Tyr-24 is subject to Phosphotyrosine. Position 35 is a phosphoserine (Ser-35). An N6-succinyllysine modification is found at Lys-40. Position 49 is a phosphoserine (Ser-49). His-58 contributes to the O2 binding site. His-87 contacts heme b. Ser-102 is modified (phosphoserine). At Thr-108 the chain carries Phosphothreonine. A phosphoserine mark is found at Ser-124 and Ser-131. Phosphothreonine is present on residues Thr-134 and Thr-137. Position 138 is a phosphoserine (Ser-138).

The protein belongs to the globin family. As to quaternary structure, heterotetramer of two alpha chains and two beta chains. As to expression, red blood cells.

In terms of biological role, involved in oxygen transport from the lung to the various peripheral tissues. Hemopressin acts as an antagonist peptide of the cannabinoid receptor CNR1. Hemopressin-binding efficiently blocks cannabinoid receptor CNR1 and subsequent signaling. The chain is Hemoglobin subunit alpha (HBA) from Urocitellus townsendii (Townsend's ground squirrel).